A 267-amino-acid chain; its full sequence is 4-hydroxy-tetrahydrodipicolinate reductase (267 aa).

Residues 8 to 13 (GAAGRM) and aspartate 34 each bind NAD(+). Arginine 35 contacts NADP(+). Residues 98–100 (GTT) and 122–125 (AANF) contribute to the NAD(+) site. The Proton donor/acceptor role is filled by histidine 155. Position 156 (histidine 156) interacts with (S)-2,3,4,5-tetrahydrodipicolinate. The active-site Proton donor is lysine 159. 165–166 (GT) serves as a coordination point for (S)-2,3,4,5-tetrahydrodipicolinate.

The protein belongs to the DapB family.

It localises to the cytoplasm. The catalysed reaction is (S)-2,3,4,5-tetrahydrodipicolinate + NAD(+) + H2O = (2S,4S)-4-hydroxy-2,3,4,5-tetrahydrodipicolinate + NADH + H(+). It catalyses the reaction (S)-2,3,4,5-tetrahydrodipicolinate + NADP(+) + H2O = (2S,4S)-4-hydroxy-2,3,4,5-tetrahydrodipicolinate + NADPH + H(+). Its pathway is amino-acid biosynthesis; L-lysine biosynthesis via DAP pathway; (S)-tetrahydrodipicolinate from L-aspartate: step 4/4. Catalyzes the conversion of 4-hydroxy-tetrahydrodipicolinate (HTPA) to tetrahydrodipicolinate. The polypeptide is 4-hydroxy-tetrahydrodipicolinate reductase (Pseudomonas putida (strain ATCC 700007 / DSM 6899 / JCM 31910 / BCRC 17059 / LMG 24140 / F1)).